Consider the following 269-residue polypeptide: MNRISALILDWAGTTVDFGSFAPTQIFVEAFRQAFDIEITLEEARVPMGLGKWQHIEALGKLPAVDSRWQAKFGRAMTAADIDAIYAAFMPLQIAKVVDFSAPIAGVVDTIAALRAKGLKIGSCSGYPRPVMEKLVPAAAAQGYAPDHWVATDDLAAGGRPGPWMALQNVITLGIDDVAHCVKVDDAAPGISEGLHAGMWSVGLAVSGNEFGATWEEYQAMSKAEIATRRERAAGKLYAAGAHYVVDTLADLPEVIADINARLAKGERP.

Catalysis depends on Asp-10, which acts as the Nucleophile. Residues Asp-10 and Ala-12 each coordinate Mg(2+). Lys-52 serves as the catalytic Schiff-base intermediate with substrate. Mg(2+) is bound at residue Asp-186.

Belongs to the HAD-like hydrolase superfamily. PhnX family. Homodimer. The cofactor is Mg(2+).

The enzyme catalyses phosphonoacetaldehyde + H2O = acetaldehyde + phosphate + H(+). In terms of biological role, involved in phosphonate degradation. The polypeptide is Phosphonoacetaldehyde hydrolase (Klebsiella pneumoniae subsp. pneumoniae (strain ATCC 700721 / MGH 78578)).